A 270-amino-acid polypeptide reads, in one-letter code: Protein-ADP-ribose hydrolase (270 aa).

Residues 73-267 (VSVKDCQKTN…LYDTYLQKEN (195 aa)) enclose the Macro domain. ADP-D-ribose-binding residues include aspartate 92, isoleucine 93, and asparagine 106. 3 residues coordinate Zn(2+): cysteine 112, histidine 117, and cysteine 119. The ADP-D-ribose site is built by cysteine 119, isoleucine 120, aspartate 121, serine 212, threonine 213, glycine 214, glutamate 215, and phenylalanine 216.

This sequence belongs to the MacroD-type family. Zn-Macro subfamily. Zn(2+) serves as cofactor.

It carries out the reaction 4-O-(ADP-D-ribosyl)-L-aspartyl-[protein] + H2O = L-aspartyl-[protein] + ADP-D-ribose + H(+). In terms of biological role, ADP-ribosylhydrolase that specifically reverses the SirTM-mediated mono-ADP-ribosylation at an asparatate residue of GcvH-L, by releasing ADP-ribose from the target protein. May play a role in the regulation of the response to host-induced oxidative stress. This Streptococcus pyogenes serotype M18 (strain MGAS8232) protein is Protein-ADP-ribose hydrolase.